A 329-amino-acid chain; its full sequence is GTP 3',8-cyclase (329 aa).

One can recognise a Radical SAM core domain in the interval 8-234; that stretch reads AFARKFYYLR…QLRQRSDGPA (227 aa). GTP is bound at residue Arg-17. [4Fe-4S] cluster contacts are provided by Cys-24 and Cys-28. Tyr-30 contacts S-adenosyl-L-methionine. Cys-31 is a binding site for [4Fe-4S] cluster. Arg-68 serves as a coordination point for GTP. Residue Gly-72 coordinates S-adenosyl-L-methionine. Residue Thr-99 coordinates GTP. Ser-123 contacts S-adenosyl-L-methionine. Lys-160 is a GTP binding site. An S-adenosyl-L-methionine-binding site is contributed by Met-194. The [4Fe-4S] cluster site is built by Cys-257 and Cys-260. 262–264 provides a ligand contact to GTP; it reads RLR. Residue Cys-274 participates in [4Fe-4S] cluster binding.

Belongs to the radical SAM superfamily. MoaA family. As to quaternary structure, monomer and homodimer. The cofactor is [4Fe-4S] cluster.

The enzyme catalyses GTP + AH2 + S-adenosyl-L-methionine = (8S)-3',8-cyclo-7,8-dihydroguanosine 5'-triphosphate + 5'-deoxyadenosine + L-methionine + A + H(+). It functions in the pathway cofactor biosynthesis; molybdopterin biosynthesis. Its function is as follows. Catalyzes the cyclization of GTP to (8S)-3',8-cyclo-7,8-dihydroguanosine 5'-triphosphate. This chain is GTP 3',8-cyclase, found in Escherichia fergusonii (strain ATCC 35469 / DSM 13698 / CCUG 18766 / IAM 14443 / JCM 21226 / LMG 7866 / NBRC 102419 / NCTC 12128 / CDC 0568-73).